The sequence spans 810 residues: Type I restriction enzyme EcoAI endonuclease subunit (810 aa).

A Helicase ATP-binding domain is found at 183 to 343 (EAVSNGQNRV…TDYFGDPVYV (161 aa)). 197 to 203 (ATGTGKT) contacts ATP. A Helicase C-terminal domain is found at 412-575 (TITDYLKRTN…DIADPESDFE (164 aa)). The segment covering 578–588 (LEEISEHDEEQ) has biased composition (acidic residues). The segment at 578 to 608 (LEEISEHDEEQVTGVDEPPAPPYQVTDTDDV) is disordered.

The protein belongs to the HsdR family. In terms of assembly, the type I restriction/modification system is composed of three polypeptides R, M and S. The restriction enzyme has stoichiometry R(2)M(2)S(1) while the methyltransferase is M(2)S(1).

The enzyme catalyses Endonucleolytic cleavage of DNA to give random double-stranded fragments with terminal 5'-phosphates, ATP is simultaneously hydrolyzed.. Its function is as follows. The subtype B restriction (R) subunit of a type I restriction enzyme that recognizes 5'-GAGN(7)GTCA-3' and cleaves a random distance away. Subunit R is required for both nuclease and ATPase activities, but not for modification. After locating a non-methylated recognition site, the enzyme complex serves as a molecular motor that translocates DNA in an ATP-dependent manner until a collision occurs that triggers cleavage. In Escherichia coli, this protein is Type I restriction enzyme EcoAI endonuclease subunit.